Here is a 298-residue protein sequence, read N- to C-terminus: DNA repair protein RecO (298 aa).

This sequence belongs to the RecO family.

Functionally, involved in DNA repair and RecF pathway recombination. This Cupriavidus metallidurans (strain ATCC 43123 / DSM 2839 / NBRC 102507 / CH34) (Ralstonia metallidurans) protein is DNA repair protein RecO.